Reading from the N-terminus, the 286-residue chain is D-tagatose-1,6-bisphosphate aldolase subunit KbaY (286 aa).

D82 (proton donor) is an active-site residue. Residues H83 and H180 each contribute to the Zn(2+) site. Residue G181 coordinates dihydroxyacetone phosphate. H208 provides a ligand contact to Zn(2+). Residues 209 to 211 (GAS) and 230 to 233 (NVAT) contribute to the dihydroxyacetone phosphate site.

The protein belongs to the class II fructose-bisphosphate aldolase family. TagBP aldolase KbaY subfamily. Homotetramer. Forms a complex with KbaZ. Zn(2+) serves as cofactor.

It catalyses the reaction D-tagatofuranose 1,6-bisphosphate = D-glyceraldehyde 3-phosphate + dihydroxyacetone phosphate. Its pathway is carbohydrate metabolism; D-tagatose 6-phosphate degradation; D-glyceraldehyde 3-phosphate and glycerone phosphate from D-tagatose 6-phosphate: step 2/2. In terms of biological role, catalytic subunit of the tagatose-1,6-bisphosphate aldolase KbaYZ, which catalyzes the reversible aldol condensation of dihydroxyacetone phosphate (DHAP or glycerone-phosphate) with glyceraldehyde 3-phosphate (G3P) to produce tagatose 1,6-bisphosphate (TBP). Requires KbaZ subunit for full activity and stability. The chain is D-tagatose-1,6-bisphosphate aldolase subunit KbaY from Escherichia coli O127:H6 (strain E2348/69 / EPEC).